A 382-amino-acid polypeptide reads, in one-letter code: 1-deoxy-D-xylulose 5-phosphate reductoisomerase (382 aa).

NADPH is bound by residues threonine 10, glycine 11, serine 12, isoleucine 13, glycine 36, and asparagine 122. Residue lysine 123 participates in 1-deoxy-D-xylulose 5-phosphate binding. Glutamate 124 serves as a coordination point for NADPH. Residue aspartate 148 coordinates Mn(2+). Serine 149, glutamate 150, serine 174, and histidine 197 together coordinate 1-deoxy-D-xylulose 5-phosphate. Glutamate 150 lines the Mn(2+) pocket. Residue glycine 203 participates in NADPH binding. Serine 210, asparagine 215, lysine 216, and glutamate 219 together coordinate 1-deoxy-D-xylulose 5-phosphate. Position 219 (glutamate 219) interacts with Mn(2+).

Belongs to the DXR family. Requires Mg(2+) as cofactor. It depends on Mn(2+) as a cofactor.

It carries out the reaction 2-C-methyl-D-erythritol 4-phosphate + NADP(+) = 1-deoxy-D-xylulose 5-phosphate + NADPH + H(+). It functions in the pathway isoprenoid biosynthesis; isopentenyl diphosphate biosynthesis via DXP pathway; isopentenyl diphosphate from 1-deoxy-D-xylulose 5-phosphate: step 1/6. Functionally, catalyzes the NADPH-dependent rearrangement and reduction of 1-deoxy-D-xylulose-5-phosphate (DXP) to 2-C-methyl-D-erythritol 4-phosphate (MEP). The protein is 1-deoxy-D-xylulose 5-phosphate reductoisomerase of Chlorobium phaeobacteroides (strain BS1).